Here is a 2690-residue protein sequence, read N- to C-terminus: Non-reducing polyketide synthase pigA (2690 aa).

The Starter acyltransferase (SAT) domain occupies 96 to 211 (NILLSPLVVI…AELSRVLQDF (116 aa)). The active-site Nucleophile; for transacylase activity is Cys140. His258 serves as the catalytic Proton donor/acceptor; for transacylase activity. The 417-residue stretch at 388–804 (ENDIAVIGMS…GSNASLIVTQ (417 aa)) folds into the Ketosynthase family 3 (KS3) domain. Residues Cys553, His688, and His727 each act as for beta-ketoacyl synthase activity in the active site. The region spanning 915–1182 (FGGQISTFVG…VQRLAKQHPS (268 aa)) is the Malonyl-CoA:ACP transacylase (MAT) domain. Residues 1296 to 1426 (LTFVGYQDKD…GKVFFRSVDD (131 aa)) are N-terminal hotdog fold. The PKS/mFAS DH domain maps to 1296–1602 (LTFVGYQDKD…YAKVPKMSMS (307 aa)). The product template (PT) domain stretch occupies residues 1323-1600 (LVSGHLIAQT…INYAKVPKMS (278 aa)). The Proton acceptor; for dehydratase activity role is filled by His1327. The segment at 1454-1602 (ADDIIQGRNI…YAKVPKMSMS (149 aa)) is C-terminal hotdog fold. The active-site Proton donor; for dehydratase activity is Asp1510. The Carrier 1 domain maps to 1657 to 1731 (PDISGKVRAM…GLLRCIQEAL (75 aa)). The residue at position 1691 (Ser1691) is an O-(pantetheine 4'-phosphoryl)serine. The segment at 1731–1764 (LGPSEGVEEETDNEEGEDGESSENPSVFTPSDAA) is disordered. A compositionally biased stretch (acidic residues) spans 1736–1751 (GVEEETDNEEGEDGES). The segment covering 1755–1764 (PSVFTPSDAA) has biased composition (polar residues). Positions 1768–1842 (SSAKADVAEF…EFDVKVNGKS (75 aa)) constitute a Carrier 2 domain. Ser1802 is subject to O-(pantetheine 4'-phosphoryl)serine. Positions 1948-2255 (QTLERIKYLP…EVNIQRIFLA (308 aa)) are methyltransferase domain. One can recognise a Thioester reductase (TE) domain in the interval 2320 to 2564 (VTGATGSLGS…LSWTPVNDVA (245 aa)).

Pantetheine 4'-phosphate is required as a cofactor.

It functions in the pathway secondary metabolite biosynthesis. Its function is as follows. Non-reducing polyketide synthase; part of the gene cluster that mediates the biosynthesis of azaphilone pigments (MonAzPs), a complex mixture of compounds with a common azaphilone skeleton very widely used as food colorants. PigA catalyzes the first step of MonAzPs biosynthesis and forms the hexaketide precursor from successive condensations of five malonyl-CoA units, with a simple acetyl-CoA starter unit. The starter acyl transferase (SAT) domain of pigA selects an acetyl-CoA starter unit, and the ketoacyl synthase (KS)-acyl transferase (AT)-acyl carrier protein (ACP) domains extend this starter unit five times with malonyl-CoA in five successive decarboxylative Claisen condensation cycles. The methyltransferase (MT) domain conducts a single C-methylation at C-4, most likely at the pentaketide stage. The reactive hexaketide chain then undergoes a product template (PT) domain-mediated C-2 to C-7 aldol cyclization to afford the first aromatic ring, followed by reductive release of the first pathway intermediate by the NADPH-dependent reductive release (R) domain. The role of esterase pigG is not clear, but it may play at most a supplementary role in the formation of the benzaldehyde produced by the pigA nrPKS. This very reactive benzaldehyde is intercepted by the pigC ketoreductase that to provide the first stable enzyme-free MonAzPs intermediate, 6-(4-hydroxy-2-oxopentyl)-3-methyl-2,4-dioxocyclohexane carbaldehyde, also known as M7PKS-1. The FAD-dependent monooxygenase pigN hydroxylates M7PKS-1 at C-4, which triggers the formation of the pyran ring. PigJ, pigK and pigD are involved in the acetylation of the pyran ring. PigJ and pigK form the two subunits of a dedicated fungal FAS that produces the side chain fatty acyl moiety of MonAzPs and pigD transfers the fatty acyl chain to the C-4 alcohol. PigM and pigO are involved in the elimination of the omega-1 alcohol. PigM acts as an O-acetyltransferase that synthesizes the putative O-11 acetyl intermediate whereas pigO eliminates acetic acid to yield an intermediate with a C10(11) double bond. The dehydration of the C-11 alcohol followed by the reduction of the C6(7) double bond by the NAD(P)H-dependent oxidoreductase pigE increases the electrophilicity of the C-5 ketone of the resulting acyl benzopyran. This in turn sets up the C-5 ketone for an intramolecular Knoevenagel aldol condensation with the C-20 enol of the side chain. This condensation affords the characteristic linear tricyclic carbon skeletons of the yellow pigments that serve as the common precursors for the classical yellow pigments monascin and ankaflavin, orange pigments rubopunctatin and monascorubrin, and red pigments ribropunctamine and monascorubramine. The FAD-dependent oxidoreductase pigF is especially invoved in the biosynthesis of orange and red pigments via desaturation of C6(7). The chain is Non-reducing polyketide synthase pigA from Monascus ruber (Mold).